Here is a 211-residue protein sequence, read N- to C-terminus: Large ribosomal subunit protein bL25 (211 aa).

The interval 175-211 (VSEPVEQDLGEESETEEEGAEGEKPAESTGEEPGDDE) is disordered. The span at 179–194 (VEQDLGEESETEEEGA) shows a compositional bias: acidic residues.

The protein belongs to the bacterial ribosomal protein bL25 family. CTC subfamily. As to quaternary structure, part of the 50S ribosomal subunit; part of the 5S rRNA/L5/L18/L25 subcomplex. Contacts the 5S rRNA. Binds to the 5S rRNA independently of L5 and L18.

Functionally, this is one of the proteins that binds to the 5S RNA in the ribosome where it forms part of the central protuberance. This Kocuria rhizophila (strain ATCC 9341 / DSM 348 / NBRC 103217 / DC2201) protein is Large ribosomal subunit protein bL25.